A 177-amino-acid polypeptide reads, in one-letter code: Nucleoside triphosphate/diphosphate phosphatase (177 aa).

R23 serves as the catalytic Proton donor. Residues N87, D103, D105, D107, D120, and E123 each contribute to the Mg(2+) site.

The protein belongs to the Ntdp family. Requires Mg(2+) as cofactor.

It catalyses the reaction a ribonucleoside 5'-triphosphate + H2O = a ribonucleoside 5'-diphosphate + phosphate + H(+). The catalysed reaction is a ribonucleoside 5'-diphosphate + H2O = a ribonucleoside 5'-phosphate + phosphate + H(+). In terms of biological role, has nucleoside phosphatase activity towards nucleoside triphosphates and nucleoside diphosphates. The polypeptide is Nucleoside triphosphate/diphosphate phosphatase (Streptococcus pyogenes serotype M1).